A 295-amino-acid polypeptide reads, in one-letter code: Glutamyl-Q tRNA(Asp) synthetase (295 aa).

L-glutamate-binding positions include 5–9 and E41; that span reads RFAPS. The short motif at 8–18 is the 'HIGH' region element; it reads PSPTGLLHIGS. Residues C97, C99, Y117, and C121 each contribute to the Zn(2+) site. L-glutamate is bound by residues Y178 and R196. The short motif at 234 to 238 is the 'KMSKS' region element; the sequence is KWSKQ. K237 is a binding site for ATP.

It belongs to the class-I aminoacyl-tRNA synthetase family. GluQ subfamily. The cofactor is Zn(2+).

Functionally, catalyzes the tRNA-independent activation of glutamate in presence of ATP and the subsequent transfer of glutamate onto a tRNA(Asp). Glutamate is transferred on the 2-amino-5-(4,5-dihydroxy-2-cyclopenten-1-yl) moiety of the queuosine in the wobble position of the QUC anticodon. In Neisseria gonorrhoeae (strain ATCC 700825 / FA 1090), this protein is Glutamyl-Q tRNA(Asp) synthetase.